The sequence spans 161 residues: Allophycocyanin alpha chain (161 aa).

N71 carries the post-translational modification N4-methylasparagine. Position 81 (C81) interacts with (2R,3E)-phycocyanobilin.

It belongs to the phycobiliprotein family. In terms of assembly, heterodimer of an alpha and a beta chain. Contains one covalently linked phycocyanobilin chromophore.

The protein localises to the cellular thylakoid membrane. Light-harvesting photosynthetic bile pigment-protein from the phycobiliprotein complex. Allophycocyanin has a maximum absorption at approximately 650 nanometers. The chain is Allophycocyanin alpha chain (apcA) from Thermosynechococcus vestitus (strain NIES-2133 / IAM M-273 / BP-1).